The primary structure comprises 732 residues: DNA gyrase subunit B, mitochondrial (732 aa).

The region spanning 513 to 620 (SEIFIVEGDS…RYQRALFDAG (108 aa)) is the Toprim domain. 3 residues coordinate Mg(2+): Glu-519, Asp-593, and Asp-595.

This sequence belongs to the type II topoisomerase GyrB family. Made up of two chains. The A chain is responsible for DNA breakage and rejoining; the B chain catalyzes ATP hydrolysis. Requires Mg(2+) as cofactor. Mn(2+) serves as cofactor. The cofactor is Ca(2+).

The protein localises to the mitochondrion. It carries out the reaction ATP-dependent breakage, passage and rejoining of double-stranded DNA.. Functionally, a type II topoisomerase that negatively supercoils closed circular double-stranded DNA in an ATP-dependent manner. In Arabidopsis thaliana (Mouse-ear cress), this protein is DNA gyrase subunit B, mitochondrial (GYRBM).